A 158-amino-acid polypeptide reads, in one-letter code: MPELTHFDAAGQAHMVDVGGKQETRRIAIARGSIRMLPETFALIRDGNAKKGDVIGIARIAAIQGSKRTADLIPLCHPLALTRVKVDFELDDTLPGVHCTVQVETLGRTGVEMEALTAVQVGLLTVYDMCKAVDRGMTITDVRVLEKHGGKSGDWVAG.

Residues 75 to 77 (LCH) and 113 to 114 (ME) each bind substrate. Aspartate 128 is a catalytic residue.

The protein belongs to the MoaC family. In terms of assembly, homohexamer; trimer of dimers.

It catalyses the reaction (8S)-3',8-cyclo-7,8-dihydroguanosine 5'-triphosphate = cyclic pyranopterin phosphate + diphosphate. Its pathway is cofactor biosynthesis; molybdopterin biosynthesis. Catalyzes the conversion of (8S)-3',8-cyclo-7,8-dihydroguanosine 5'-triphosphate to cyclic pyranopterin monophosphate (cPMP). This Paraburkholderia phytofirmans (strain DSM 17436 / LMG 22146 / PsJN) (Burkholderia phytofirmans) protein is Cyclic pyranopterin monophosphate synthase.